Consider the following 362-residue polypeptide: MVLASSRPPSPTNSPADRQGTLQAWLTGLSQRIIDGDRLTREEALQLAAIEGEENILLLCEAANRIREACCGNVVDLCSIINVKSGNCSENCGFCSQSSHHPDPNSPIYGLKTEAEILEQARAAAAAGAKRFCLVSQGRGPKYHSPKDREFEQILATVRQIIQETNIKPCCALGEVTPEQAQQLKEAGVTRYNHNLEASATYYDKIVSTHTWQDRVDTVKNLKAAGIQACTGGILGMGETWEDRIDLALALRELEVESVPLNLLNPRPGTPLGEQQKLNPYDALKAIAIFRFILPQQIIRYAGGREAVMGELQDLGLKAGINAMLVGHYLTTLGQPPERDQKLLASLGLEGGEAPIPGEYQS.

The region spanning 70–305 (CCGNVVDLCS…QQIIRYAGGR (236 aa)) is the Radical SAM core domain. Residues cysteine 88, cysteine 92, and cysteine 95 each contribute to the [4Fe-4S] cluster site. Residues cysteine 133, cysteine 170, cysteine 230, and arginine 300 each contribute to the [2Fe-2S] cluster site.

Belongs to the radical SAM superfamily. Biotin synthase family. As to quaternary structure, homodimer. [4Fe-4S] cluster is required as a cofactor. [2Fe-2S] cluster serves as cofactor.

The enzyme catalyses (4R,5S)-dethiobiotin + (sulfur carrier)-SH + 2 reduced [2Fe-2S]-[ferredoxin] + 2 S-adenosyl-L-methionine = (sulfur carrier)-H + biotin + 2 5'-deoxyadenosine + 2 L-methionine + 2 oxidized [2Fe-2S]-[ferredoxin]. The protein operates within cofactor biosynthesis; biotin biosynthesis; biotin from 7,8-diaminononanoate: step 2/2. Functionally, catalyzes the conversion of dethiobiotin (DTB) to biotin by the insertion of a sulfur atom into dethiobiotin via a radical-based mechanism. This Synechocystis sp. (strain ATCC 27184 / PCC 6803 / Kazusa) protein is Biotin synthase.